The primary structure comprises 192 residues: Imidazoleglycerol-phosphate dehydratase (192 aa).

This sequence belongs to the imidazoleglycerol-phosphate dehydratase family.

It is found in the cytoplasm. The enzyme catalyses D-erythro-1-(imidazol-4-yl)glycerol 3-phosphate = 3-(imidazol-4-yl)-2-oxopropyl phosphate + H2O. The protein operates within amino-acid biosynthesis; L-histidine biosynthesis; L-histidine from 5-phospho-alpha-D-ribose 1-diphosphate: step 6/9. The chain is Imidazoleglycerol-phosphate dehydratase from Staphylococcus saprophyticus subsp. saprophyticus (strain ATCC 15305 / DSM 20229 / NCIMB 8711 / NCTC 7292 / S-41).